We begin with the raw amino-acid sequence, 356 residues long: uncharacterized protein (356 aa).

The next 6 helical transmembrane spans lie at 7-29 (LLSR…VSLY), 49-71 (YFLN…ISLI), 91-113 (ISPL…TFLL), 270-292 (LFYR…YLFF), 299-316 (QVIP…LVIL), and 329-348 (VLYS…KGVY).

It localises to the cell membrane. This is an uncharacterized protein from Aquifex aeolicus (strain VF5).